Here is a 473-residue protein sequence, read N- to C-terminus: Bestrophin-4 (473 aa).

The Cytoplasmic segment spans residues 1-31 (MTVSYTLKVAEARFGGFSGLLLRWRGSIYKL). Position 10 (A10) interacts with Ca(2+). The chain crosses the membrane as a helical span at residues 32 to 51 (LYKEFLLFGALYAVLSITYR). Residues 52 to 60 (LLLTQEQRY) lie on the Extracellular side of the membrane. Residues 61–82 (VYAQVARYCNRSADLIPLSFVL) form a helical membrane-spanning segment. Residues 83–237 (GFYVTLVVNR…DWISIPLVYT (155 aa)) lie on the Cytoplasmic side of the membrane. The helical transmembrane segment at 238–255 (QVVTIAVYSFFALSLVGR) threads the bilayer. Topologically, residues 256–289 (QFVEPEAGAAKPQKLLKPGQEPAPALGDPDMYVP) are extracellular. Residues 290–303 (LTTLLQFFFYAGWL) traverse the membrane as a helical segment. Residues 304–473 (KVAEQIINPF…AESGDEALEP (170 aa)) lie on the Cytoplasmic side of the membrane. Residues Q308, N311, D316, and D319 each coordinate Ca(2+). Disordered stretches follow at residues 379–408 (TFNLRMSDDPEQSLQVEASPGSGRPAPAAQ) and 428–473 (RNFG…ALEP). Over residues 396 to 407 (ASPGSGRPAPAA) the composition is skewed to low complexity. Residues 445–461 (FRAEEGGDPEAAARIEE) are compositionally biased toward basic and acidic residues. The segment covering 462–473 (ESAESGDEALEP) has biased composition (acidic residues).

The protein belongs to the anion channel-forming bestrophin (TC 1.A.46) family. Calcium-sensitive chloride channel subfamily. Predominantly found in colon and the weakly in fetal brain, spinal cord, retina, lung, trachea, testis and placenta.

Its subcellular location is the cell membrane. The enzyme catalyses chloride(in) = chloride(out). It catalyses the reaction hydrogencarbonate(in) = hydrogencarbonate(out). In terms of biological role, ligand-gated anion channel that allows the movement of anions across cell membranes when activated by Calcium (Ca2+). Mediates the movement of hydrogencarbonate and chloride. This chain is Bestrophin-4, found in Homo sapiens (Human).